A 205-amino-acid chain; its full sequence is Guanylate kinase (205 aa).

Positions 7–185 constitute a Guanylate kinase-like domain; sequence GNIFIISAAS…AEEDLRHIVN (179 aa). 14–21 is an ATP binding site; that stretch reads AASGTGKT.

It belongs to the guanylate kinase family.

The protein localises to the cytoplasm. It carries out the reaction GMP + ATP = GDP + ADP. In terms of biological role, essential for recycling GMP and indirectly, cGMP. This chain is Guanylate kinase (gmk), found in Neisseria meningitidis serogroup A / serotype 4A (strain DSM 15465 / Z2491).